A 114-amino-acid polypeptide reads, in one-letter code: Lymphotactin (114 aa).

A signal peptide spans Met-1–Gly-21. Cys-32 and Cys-69 are disulfide-bonded. The segment at Lys-92–Gly-114 is disordered. The span at Thr-100 to Gly-114 shows a compositional bias: polar residues.

This sequence belongs to the intercrine gamma family. As to expression, expressed in activated CD8(+) T cells. In the thymus, expressed by medullary thymic epithelial cells.

It is found in the secreted. In terms of biological role, chemotactic activity for lymphocytes but not for monocytes or neutrophils. In thymus, mediates medullary accumulation of thymic dendritic cells and contributes to regulatoy T cell development, playing a role in self-tolerance establishment. In Mus musculus (Mouse), this protein is Lymphotactin (Xcl1).